A 325-amino-acid chain; its full sequence is NADH-quinone oxidoreductase subunit H (325 aa).

The next 8 helical transmembrane spans lie at 11 to 31 (ILLT…CGAF), 81 to 101 (FIFT…FAIV), 114 to 134 (IGIL…LFAG), 154 to 174 (VSYE…AGSF), 186 to 206 (MWNI…GVAV), 237 to 257 (FFVG…TLFF), 265 to 285 (LPSF…FILI), and 304 to 324 (ICLP…LYNA).

The protein belongs to the complex I subunit 1 family. As to quaternary structure, NDH-1 is composed of 13 different subunits. Subunits NuoA, H, J, K, L, M, N constitute the membrane sector of the complex.

It is found in the cell inner membrane. It carries out the reaction a quinone + NADH + 5 H(+)(in) = a quinol + NAD(+) + 4 H(+)(out). Its function is as follows. NDH-1 shuttles electrons from NADH, via FMN and iron-sulfur (Fe-S) centers, to quinones in the respiratory chain. The immediate electron acceptor for the enzyme in this species is believed to be ubiquinone. Couples the redox reaction to proton translocation (for every two electrons transferred, four hydrogen ions are translocated across the cytoplasmic membrane), and thus conserves the redox energy in a proton gradient. This subunit may bind ubiquinone. The protein is NADH-quinone oxidoreductase subunit H of Proteus mirabilis (strain HI4320).